Consider the following 769-residue polypeptide: Bifunctional glycosyltransferase pgtA (769 aa).

Positions 25–210 are N-acetylgalactosamine 3-beta-galactosyltransferase; sequence YQGINNLIIS…SVIFKRSIFT (186 aa). The span at 410 to 441 shows a compositional bias: low complexity; it reads NNINNNNNNNNNNNNNNNNNNNNNNNNNNNNN. Residues 410–442 form a disordered region; sequence NNINNNNNNNNNNNNNNNNNNNNNNNNNNNNNS. Residues 442-769 form an alpha-1,2-fucosyltransferase region; that stretch reads SILNFISGIN…SVHIGELFIS (328 aa).

It belongs to the glycosyltransferase 2 family.

It carries out the reaction an N-acetyl-beta-D-glucosaminyl derivative + UDP-alpha-D-galactose = a beta-D-galactosyl-(1-&gt;3)-N-acetyl-beta-D-glucosaminyl derivative + UDP + H(+). The catalysed reaction is a beta-D-galactosyl-(1-&gt;3)-N-acetyl-beta-D-glucosaminyl derivative + GDP-beta-L-fucose = an alpha-L-Fuc-(1-&gt;2)-beta-D-Gal-(1-&gt;3)-beta-D-GlcNAc derivative + GDP + H(+). Bifunctional protein composed of 2 glycosyltransferase domains involved in glycosylating skp1. The N-terminal part catalyzes the transfer of a galactose residue to GlcNAc-skp1 in a beta 1-3 linkage. The C-terminal part catalyzes the transfer of a fucose residue to Gal-GlcNAc-skp1 in an alpha 1-2 linkage. The protein is Bifunctional glycosyltransferase pgtA (pgtA) of Dictyostelium discoideum (Social amoeba).